The sequence spans 107 residues: Small ribosomal subunit protein uS17 (107 aa).

The protein belongs to the universal ribosomal protein uS17 family. Part of the 30S ribosomal subunit.

Functionally, one of the primary rRNA binding proteins, it binds specifically to the 5'-end of 16S ribosomal RNA. The chain is Small ribosomal subunit protein uS17 from Nitrosopumilus maritimus (strain SCM1).